We begin with the raw amino-acid sequence, 344 residues long: MDDNKRKSLDAALKSLDKTFGKGTILRLGDKEVEKIDSIPTGSVGLDLALGIGGVPKGRIIEIYGPESSGKTTLTLHIIAECQKKGGVCAFIDAEHALDVKYAKDLGVDTENLYISQPDFGEQALEIVETIARSGAIDLIVVDSVAALTPKAEIEGDMGDQHVGLQARLMSQALRELTGIVHKMNTTVIFINQIRMKIGMMGYGTPETTTGGNALKFYSSVRLDVRKTATLKQNDEPIGNRVKVKVAKNKVAPPFKQAEFDVMFGEGVSREGELIDYGVKLDIIDKSGAWFSYKASKLGQGRENAKAFLKENPAIADEITQAIQNSIGIDSMILGAKEDDEGDE.

65-72 (GPESSGKT) contacts ATP.

It belongs to the RecA family.

Its subcellular location is the cytoplasm. Functionally, can catalyze the hydrolysis of ATP in the presence of single-stranded DNA, the ATP-dependent uptake of single-stranded DNA by duplex DNA, and the ATP-dependent hybridization of homologous single-stranded DNAs. It interacts with LexA causing its activation and leading to its autocatalytic cleavage. This is Protein RecA from Campylobacter lari.